Here is a 49-residue protein sequence, read N- to C-terminus: Large ribosomal subunit protein bL33 (49 aa).

This sequence belongs to the bacterial ribosomal protein bL33 family.

The sequence is that of Large ribosomal subunit protein bL33 from Lactiplantibacillus plantarum (strain ATCC BAA-793 / NCIMB 8826 / WCFS1) (Lactobacillus plantarum).